We begin with the raw amino-acid sequence, 609 residues long: N-acetyltransferase ESCO2 (609 aa).

4 disordered regions span residues 1-71, 100-165, 197-241, and 314-357; these read MLSR…RVSP, EAKS…TDQV, KKPT…SPVR, and PDHD…LTAT. Polar residues-rich tracts occupy residues 13-22 and 41-54; these read AESNPSKKQI and ISLN…STPK. A compositionally biased stretch (basic residues) spans 126–135; it reads PAKKVQKKPR. Over residues 214–230 the composition is skewed to basic and acidic residues; that stretch reads PTYEKPSIRKPVREKEL. A compositionally biased stretch (polar residues) spans 345 to 355; that stretch reads PLNSSTPSALT. The segment at 392-416 adopts a CCHH-type zinc-finger fold; that stretch reads TTCASCGMLYSTDSPEDNFQHTQFH.

It belongs to the acetyltransferase family. ECO subfamily.

It is found in the nucleus. The protein localises to the chromosome. The enzyme catalyses L-lysyl-[protein] + acetyl-CoA = N(6)-acetyl-L-lysyl-[protein] + CoA + H(+). Acetyltransferase required for the establishment of sister chromatid cohesion. Couples the processes of cohesion and DNA replication to ensure that only sister chromatids become paired together. Essential for early development. The chain is N-acetyltransferase ESCO2 (esco2) from Danio rerio (Zebrafish).